A 152-amino-acid chain; its full sequence is Transcriptional regulator MraZ (152 aa).

2 consecutive SpoVT-AbrB domains span residues 5-52 and 81-124; these read ATTL…PLPE and ADDC…NEDA.

This sequence belongs to the MraZ family. As to quaternary structure, forms oligomers.

Its subcellular location is the cytoplasm. The protein resides in the nucleoid. This Idiomarina loihiensis (strain ATCC BAA-735 / DSM 15497 / L2-TR) protein is Transcriptional regulator MraZ.